Consider the following 644-residue polypeptide: Phosphatidylinositol polyphosphate 5-phosphatase type IV (644 aa).

Residues 1-193 (MPSKAENLRP…RLPSLLPPRP (193 aa)) are disordered. 8 tandem repeats follow at residues 10–13 (PSEP), 15–18 (PQPP), 28–31 (PGAP), 39–42 (PPDV), 55–58 (PATP), 69–71 (PIA), 72–74 (PRP), and 75–78 (PARP). A 13 X 4 AA repeats of P-X-X-P region spans residues 10–242 (PSEPAPQPPE…SLGPGRPRSP (233 aa)). Basic and acidic residues predominate over residues 78-90 (PRLERALSLDDKG). The residue at position 99 (Ser-99) is a Phosphoserine. The span at 107–118 (NGTSPSRGSVQS) shows a compositional bias: polar residues. Copy 9 of the repeat occupies 121-124 (PGAP). Low complexity predominate over residues 152–163 (GSPSSGGNPLSG). 4 repeat units span residues 169 to 172 (PNLP), 183 to 185 (PRL), 190 to 193 (PPRP), and 236 to 239 (PGRP). A phosphoserine mark is found at Ser-241 and Ser-256. Cys-641 bears the Cysteine methyl ester mark. The S-farnesyl cysteine moiety is linked to residue Cys-641. A propeptide spans 642 to 644 (SVS) (removed in mature form).

Belongs to the inositol polyphosphate 5-phosphatase family. Interacts (when prenylated) with PDE6D; this is important for normal location in cilia.

The protein resides in the cytoplasm. It is found in the cytoskeleton. It localises to the cilium axoneme. The protein localises to the golgi apparatus. Its subcellular location is the golgi stack membrane. The protein resides in the cell membrane. It is found in the cell projection. It localises to the ruffle. The protein localises to the nucleus. It carries out the reaction a 1,2-diacyl-sn-glycero-3-phospho-(1D-myo-inositol-4,5-bisphosphate) + H2O = a 1,2-diacyl-sn-glycero-3-phospho-(1D-myo-inositol 4-phosphate) + phosphate. The enzyme catalyses a 1,2-diacyl-sn-glycero-3-phospho-(1D-myo-inositol-3,4,5-trisphosphate) + H2O = a 1,2-diacyl-sn-glycero-3-phospho-(1D-myo-inositol-3,4-bisphosphate) + phosphate. The catalysed reaction is a 1,2-diacyl-sn-glycero-3-phospho-(1D-myo-inositol-3,5-bisphosphate) + H2O = a 1,2-diacyl-sn-glycero-3-phospho-(1D-myo-inositol-3-phosphate) + phosphate. In terms of biological role, phosphatidylinositol (PtdIns) phosphatase that specifically hydrolyzes the 5-phosphate of phosphatidylinositol-3,4,5-trisphosphate (PtdIns(3,4,5)P3), phosphatidylinositol 4,5-bisphosphate(PtdIns(4,5)P2) and phosphatidylinositol 3,5-bisphosphate (PtdIns(3,5)P2). Specific for lipid substrates, inactive towards water soluble inositol phosphates. Plays an essential role in the primary cilium by controlling ciliary growth and phosphoinositide 3-kinase (PI3K) signaling and stability. The chain is Phosphatidylinositol polyphosphate 5-phosphatase type IV (INPP5E) from Pan troglodytes (Chimpanzee).